A 505-amino-acid chain; its full sequence is DEAD-box ATP-dependent RNA helicase 8 (505 aa).

Positions 1–85 are disordered; sequence MNNRGRYPPG…GQIPGGNSNG (85 aa). Residues 20-31 show a composition bias toward polar residues; sequence PNPNYQSRSGYQ. Positions 43 to 71 are enriched in low complexity; sequence NYAQNHQQQFQQAPSQPHQYQQQQQQQQQ. Residues 131-159 carry the Q motif motif; the sequence is NEFEDYFLKRELLMGIYEKGFERPSPIQE. The Helicase ATP-binding domain occupies 162–332; it reads IPIALTGRDI…DRFLTNPYVI (171 aa). 175 to 182 contacts ATP; that stretch reads AKNGTGKT. Threonine 237 bears the Phosphothreonine mark. A DEAD box motif is present at residues 280–283; the sequence is DEAD. The 161-residue stretch at 342-502 folds into the Helicase C-terminal domain; sequence GITQFYAFVE…QIPPHIDQAI (161 aa).

It belongs to the DEAD box helicase family. DDX6/DHH1 subfamily.

It localises to the cytoplasm. Its subcellular location is the P-body. The enzyme catalyses ATP + H2O = ADP + phosphate + H(+). Functionally, ATP-dependent RNA helicase involved in mRNA turnover, and more specifically in mRNA decapping. The protein is DEAD-box ATP-dependent RNA helicase 8 (RH8) of Arabidopsis thaliana (Mouse-ear cress).